The sequence spans 271 residues: MPELPEVETTLRGLLPYLTNQLIYSLTLRRRTLRWDIPSHIESRLPGHRITTVCRRAKYLLIDTNAGGSLIIHLGMSGTLRLLAPETPLRPHDHVDIMLNNRRVLRFNDPRRFGCLLWQEDGQIHPLLQRLGCEPLSDSFNGDYLYQCSRARNVSVKTFLMDQRIVVGVGNIYAAESLFRAGISPLCEADKISLQRYRRLAEVVKDILLYAINRGGTTLRDFLSPDGRPGYFKQELFVYGRQQQPCKQCGSLLRQTTIRQRTTVWCGHCQG.

The active-site Schiff-base intermediate with DNA is P2. The active-site Proton donor is E3. The Proton donor; for beta-elimination activity role is filled by K58. H92, R111, and R152 together coordinate DNA. The segment at 237–271 (FVYGRQQQPCKQCGSLLRQTTIRQRTTVWCGHCQG) adopts an FPG-type zinc-finger fold. The Proton donor; for delta-elimination activity role is filled by R261.

It belongs to the FPG family. As to quaternary structure, monomer. It depends on Zn(2+) as a cofactor.

The catalysed reaction is Hydrolysis of DNA containing ring-opened 7-methylguanine residues, releasing 2,6-diamino-4-hydroxy-5-(N-methyl)formamidopyrimidine.. The enzyme catalyses 2'-deoxyribonucleotide-(2'-deoxyribose 5'-phosphate)-2'-deoxyribonucleotide-DNA = a 3'-end 2'-deoxyribonucleotide-(2,3-dehydro-2,3-deoxyribose 5'-phosphate)-DNA + a 5'-end 5'-phospho-2'-deoxyribonucleoside-DNA + H(+). In terms of biological role, involved in base excision repair of DNA damaged by oxidation or by mutagenic agents. Acts as a DNA glycosylase that recognizes and removes damaged bases. Has a preference for oxidized purines, such as 7,8-dihydro-8-oxoguanine (8-oxoG). Has AP (apurinic/apyrimidinic) lyase activity and introduces nicks in the DNA strand. Cleaves the DNA backbone by beta-delta elimination to generate a single-strand break at the site of the removed base with both 3'- and 5'-phosphates. This is Formamidopyrimidine-DNA glycosylase (mutM1) from Xylella fastidiosa (strain 9a5c).